The primary structure comprises 157 residues: Small ribosomal subunit protein uS7 (157 aa).

Belongs to the universal ribosomal protein uS7 family. As to quaternary structure, part of the 30S ribosomal subunit. Contacts proteins S9 and S11.

In terms of biological role, one of the primary rRNA binding proteins, it binds directly to 16S rRNA where it nucleates assembly of the head domain of the 30S subunit. Is located at the subunit interface close to the decoding center, probably blocks exit of the E-site tRNA. This Caldicellulosiruptor saccharolyticus (strain ATCC 43494 / DSM 8903 / Tp8T 6331) protein is Small ribosomal subunit protein uS7.